Here is a 264-residue protein sequence, read N- to C-terminus: DNA repair protein RecO (264 aa).

This sequence belongs to the RecO family.

Its function is as follows. Involved in DNA repair and RecF pathway recombination. This chain is DNA repair protein RecO, found in Leuconostoc citreum (strain KM20).